The primary structure comprises 574 residues: MNDEGDLLQENTRDEGNETEASRMSKLRRTRKKVTKQHIFSTEVGEMDVSNSKERIRSQMVCHTLGNMSKPVVGPGSADSHLPQDDKDSENQTTVIKPSPLKTSASAPCSEFNTNSNHADNTWEDTQIPTTPHLSSRMKHIKQEMAKNHLQFVRFEATDLHGVSRSKSIPAHFFQEKVIHGVCMPRGYLELIPNPKDDEVDHIRATCFNSDIVLMPELSTFRVLPWAERTARVICDTFTVTGEPLLTSPRYIAKRQLSQLQDSGFSLLSAFIYDFCIFAVPEIINSKTISFPASTLLNNHDQPFIQELVDGLYHTGANVESFSSSTRPGQMEICFLPEFGISSADNAFTLRTGVKEVARKYNYIASFFIETGFCNSGILSHSLWDVDGKKNMFCSSSGIEELTITGKKWLAGLLKHSAALSCLMAPAVSCRKRYSKESKDLKESVPTTWGYNDNSCAFNIKCHGEKGTRIENKLGSATANPYLVLAATVAAGLDGLQSSDGVLASPGDSTDLYPSKPSEIPLKLEDALVALEEDQCLRQALGETFIRYFVAMKKYDLENEETDAERNKFLEYFI.

2 disordered regions span residues Met-1–Lys-36 and Gly-66–Thr-131. The segment covering Asn-11–Arg-23 has biased composition (basic and acidic residues). The span at Ser-25 to Lys-36 shows a compositional bias: basic residues. Residues Asn-91–Thr-131 show a composition bias toward polar residues. The GS beta-grasp domain maps to Asn-148–Gly-242. The 326-residue stretch at Pro-249–Ile-574 folds into the GS catalytic domain.

Belongs to the glutamine synthetase family. Dodecamer. Interacts with BFSP2 and VIM.

In terms of biological role, may act as a component of the cytoskeleton or as a chaperone for the reorganization of intermediate filament proteins during terminal differentiation in the lens. Does not seem to have enzymatic activity. The sequence is that of Lengsin (LGSN) from Canis lupus familiaris (Dog).